The primary structure comprises 557 residues: MASDLDIARASRLRPIGEIAAAAGIPAEALIPYGRYKGKVDGGFIRSLEDRPDGALVLVVGISPTPAGEGKTTTSIGLGDALRAAGAKAMIALREPSLGPCFGQKGGATGGGRAQVAPMEEINLHFTGDFHAITSANNLLAAMLDNHVYWGNELGIDPRRIAFRRAIDMNDRALRQTVLGLGDGANGAAREQKFDITVASEVMAIFCLARDLDDLQRRLARIVVAERRDGSPVTPADLKAVGAMAALLRDALQPNLVQTLEGTPALVHGGPFANIAHGCNSVIATRTALKLADIVVTEAGFGADLGGEKFLDIKCRQAGLAPSCAVVVATIRALKMHAGVAKADLGAENPGAVARGAANLRRHVAAMRAFGLPVIVAINGFVTDTGAEREALRAALDEDGGARICFCTHWADGSAGATDLAQAVIETIAAKSARFAPLYPDDMKLPHKLRTIAQRIYGADDIELSPLAAKRLARFEAQGYDHLPVCVAKTQYSFTADPARRGAPTGFTVPIRDARLSAGAGFVVALAGDVMTMPGLPRIPAAEAIGLDPDGAIHGLF.

An ATP-binding site is contributed by 65 to 72 (TPAGEGKT).

The protein belongs to the formate--tetrahydrofolate ligase family.

The catalysed reaction is (6S)-5,6,7,8-tetrahydrofolate + formate + ATP = (6R)-10-formyltetrahydrofolate + ADP + phosphate. It functions in the pathway one-carbon metabolism; tetrahydrofolate interconversion. This is Formate--tetrahydrofolate ligase from Acidiphilium cryptum (strain JF-5).